Consider the following 730-residue polypeptide: Catalase-peroxidase (730 aa).

Residues W92–Y225 constitute a cross-link (tryptophyl-tyrosyl-methioninium (Trp-Tyr) (with M-251)). The active-site Proton acceptor is the H93. Residues Y225–M251 constitute a cross-link (tryptophyl-tyrosyl-methioninium (Tyr-Met) (with W-92)). Position 266 (H266) interacts with heme b.

It belongs to the peroxidase family. Peroxidase/catalase subfamily. As to quaternary structure, homodimer or homotetramer. Heme b is required as a cofactor. Post-translationally, formation of the three residue Trp-Tyr-Met cross-link is important for the catalase, but not the peroxidase activity of the enzyme.

Its subcellular location is the cytoplasm. It catalyses the reaction H2O2 + AH2 = A + 2 H2O. It carries out the reaction 2 H2O2 = O2 + 2 H2O. Bifunctional enzyme with both catalase and broad-spectrum peroxidase activity. This chain is Catalase-peroxidase, found in Blumeria hordei (Barley powdery mildew).